A 316-amino-acid chain; its full sequence is Apolipoprotein E (316 aa).

A signal peptide spans 1-18; sequence MKVLWVALVVALLAGCQA. A run of 8 repeats spans residues 79–100, 101–122, 123–144, 145–166, 167–188, 189–210, 211–232, and 233–254. The 8 X 22 AA approximate tandem repeats stretch occupies residues 79 to 254; that stretch reads VLMEETMKEV…RLDKMRQQLE (176 aa). Methionine sulfoxide is present on M142. S146 is modified (phosphoserine). Residues 157-167 are LDL and other lipoprotein receptors binding; it reads HLRKLRKRLLR. 161–164 contributes to the heparin binding site; sequence LRKR. The lipid-binding and lipoprotein association stretch occupies residues 209–289; sequence AATLSTQVGQ…SWFEPLVEDM (81 aa). Heparin is bound at residue 228 to 235; that stretch reads RQKLHGRL. Residues 265–316 are homooligomerization; the sequence is SQIRLQAEAFQARLRSWFEPLVEDMQRQWAGLVEKVQLALHLSPTSPPSENH. The tract at residues 277 to 289 is specificity for association with VLDL; it reads RLRSWFEPLVEDM.

The protein belongs to the apolipoprotein A1/A4/E family. Homotetramer. May interact with ABCA1; functionally associated with ABCA1 in the biogenesis of HDLs. May interact with APP/A4 amyloid-beta peptide; the interaction is extremely stable in vitro but its physiological significance is unclear. May interact with MAPT. May interact with MAP2. In the cerebrospinal fluid, interacts with secreted SORL1. Interacts with PMEL; this allows the loading of PMEL luminal fragment on ILVs to induce fibril nucleation. APOE exists as multiple glycosylated and sialylated glycoforms within cells and in plasma. The extent of glycosylation and sialylation are tissue and context specific. In terms of processing, glycated in plasma VLDL. Post-translationally, phosphorylated by FAM20C in the extracellular medium.

It is found in the secreted. It localises to the extracellular space. The protein localises to the extracellular matrix. Its subcellular location is the extracellular vesicle. The protein resides in the endosome. It is found in the multivesicular body. APOE is an apolipoprotein, a protein associating with lipid particles, that mainly functions in lipoprotein-mediated lipid transport between organs via the plasma and interstitial fluids. APOE is a core component of plasma lipoproteins and is involved in their production, conversion and clearance. Apolipoproteins are amphipathic molecules that interact both with lipids of the lipoprotein particle core and the aqueous environment of the plasma. As such, APOE associates with chylomicrons, chylomicron remnants, very low density lipoproteins (VLDL) and intermediate density lipoproteins (IDL) but shows a preferential binding to high-density lipoproteins (HDL). It also binds a wide range of cellular receptors including the LDL receptor/LDLR and the very low-density lipoprotein receptor/VLDLR that mediate the cellular uptake of the APOE-containing lipoprotein particles. Finally, APOE also has a heparin-binding activity and binds heparan-sulfate proteoglycans on the surface of cells, a property that supports the capture and the receptor-mediated uptake of APOE-containing lipoproteins by cells. The polypeptide is Apolipoprotein E (APOE) (Ovis aries (Sheep)).